Here is a 564-residue protein sequence, read N- to C-terminus: Ell-associated factor Eaf (564 aa).

Disordered regions lie at residues 179–255 and 270–564; these read SGPG…MITD and QANI…DDDD. Positions 186-205 are enriched in polar residues; that stretch reads ENSTMRVSSKTKVSTGSRRN. Serine 215 carries the phosphoserine modification. Residues 274–283 show a composition bias toward low complexity; that stretch reads SGSSTGSSSG. Over residues 297 to 309 the composition is skewed to basic residues; it reads GKQRQAHGKRQQI. 3 stretches are compositionally biased toward low complexity: residues 315–329, 343–387, and 409–420; these read PPVQ…QQQP, QQQQ…QQRP, and ASQSVAQAAAVL. Acidic residues predominate over residues 438–453; it reads DSSDSDSGSDSDDSTE. Low complexity-rich tracts occupy residues 463 to 505, 523 to 533, and 546 to 564; these read EQQQ…NQLP, QQPQPQPQQQQ, and NDLL…DDDD.

It belongs to the EAF family.

It localises to the nucleus. Promotes transcriptional elongation by Su(Tpl)/ELL. Essential for development. In Drosophila pseudoobscura pseudoobscura (Fruit fly), this protein is Ell-associated factor Eaf.